Here is a 356-residue protein sequence, read N- to C-terminus: Protein RecA (356 aa).

ATP is bound at residue 67–74 (GPESSGKT).

This sequence belongs to the RecA family.

It is found in the cytoplasm. Functionally, can catalyze the hydrolysis of ATP in the presence of single-stranded DNA, the ATP-dependent uptake of single-stranded DNA by duplex DNA, and the ATP-dependent hybridization of homologous single-stranded DNAs. It interacts with LexA causing its activation and leading to its autocatalytic cleavage. The protein is Protein RecA of Yersinia pestis (strain Pestoides F).